We begin with the raw amino-acid sequence, 373 residues long: Peroxisomal biogenesis factor 3 (373 aa).

The Cytoplasmic segment spans residues 1–15 (MLRSVWNFLKRHKKK). Residues 1-45 (MLRSVWNFLKRHKKKCIFLGTVLGGVYILGKYGQKKIREIQEREA) are targeting to peroxisomes. A helical transmembrane segment spans residues 16-36 (CIFLGTVLGGVYILGKYGQKK). Residues 37-116 (IREIQEREAA…LKIISFTRST (80 aa)) lie on the Peroxisomal side of the membrane. Residues 117–140 (VAVYSTCMLVVLLRVQLNIIGGYI) form a helical membrane-spanning segment. Residues 120–136 (YSTCMLVVLLRVQLNII) are interaction with PEX19. The Cytoplasmic portion of the chain corresponds to 141 to 373 (YLDNAAVGKN…AFSTPQQLEK (233 aa)).

Belongs to the peroxin-3 family. As to quaternary structure, interacts with PEX19. Found in all examined tissues.

It is found in the peroxisome membrane. Involved in peroxisome biosynthesis and integrity. Assembles membrane vesicles before the matrix proteins are translocated. As a docking factor for PEX19, is necessary for the import of peroxisomal membrane proteins in the peroxisomes. The polypeptide is Peroxisomal biogenesis factor 3 (PEX3) (Homo sapiens (Human)).